A 124-amino-acid polypeptide reads, in one-letter code: UPF0102 protein Haur_0145 (124 aa).

This sequence belongs to the UPF0102 family.

In Herpetosiphon aurantiacus (strain ATCC 23779 / DSM 785 / 114-95), this protein is UPF0102 protein Haur_0145.